Reading from the N-terminus, the 114-residue chain is Ig kappa chain V-I region S107A (114 aa).

A framework-1 region spans residues 1–23 (DIVMTQSPTFLAVTASKKVTISC). C23 and C94 form a disulfide bridge. The complementarity-determining-1 stretch occupies residues 24 to 40 (TASESLYSSKHKVHYLA). The tract at residues 41-55 (WYQKKPEQSPKLLIY) is framework-2. Residues 56-62 (GASNRYI) are complementarity-determining-2. Positions 63–94 (GVPDRFTGSGSGTDFTLTISSVQVEDLTHYYC) are framework-3. A complementarity-determining-3 region spans residues 95–103 (AQFYSYPLT). The segment at 104–113 (FGAGTKLELK) is framework-4.

Functionally, anti-phosphocholine antibody. The polypeptide is Ig kappa chain V-I region S107A (Igkv7-33) (Mus musculus (Mouse)).